We begin with the raw amino-acid sequence, 53 residues long: Zinc metalloproteinase-disintegrin-like alborhagin (53 aa).

It belongs to the venom metalloproteinase (M12B) family. P-III subfamily. P-IIIb sub-subfamily. Monomer. Zn(2+) serves as cofactor. Contains numerous disulfide bonds. Post-translationally, glycosylated. Expressed by the venom gland.

Its subcellular location is the secreted. Its activity is regulated as follows. Alborhagin-induced platelet aggregation, but not shape change, is inhibited by EDTA, suggesting that the platelet activation (shape change) is independent of divalent cation or metalloproteinase activity. Induces platelet activation and glycoprotein VI (GP6)-dependent platelet aggregation. Induces ectodomain cleavage of GP6 by activating endogenous platelet metalloproteinases (probably ADAM10). Has fibrinogenolytic activity against the alpha chain of fibrinogen (FGA). Recognizes distinct binding sites as convulxin, since alborhagin has minimal effect on convulxin binding to GPVI-expressing cells. In terms of biological role, disintegrin alborhagin-C: 42 kDa fragment of alborhagin autoproteolysed that does not show platelet activation. This chain is Zinc metalloproteinase-disintegrin-like alborhagin, found in Trimeresurus albolabris (White-lipped pit viper).